A 623-amino-acid polypeptide reads, in one-letter code: Transketolase (623 aa).

Met1 is modified (N-acetylmethionine). Lys6 and Lys11 each carry N6-acetyllysine. His37 is a substrate binding site. Ser40 and His77 together coordinate thiamine diphosphate. A Phosphoserine modification is found at Ser104. 123–125 (GSL) is a binding site for thiamine diphosphate. At Lys144 the chain carries N6-acetyllysine. Asp155 contributes to the Mg(2+) binding site. The thiamine diphosphate site is built by Gly156 and Asn185. Mg(2+)-binding residues include Asn185 and Leu187. Lys204, Lys232, and Lys241 each carry N6-acetyllysine. Residues Lys244 and His258 each coordinate thiamine diphosphate. A substrate-binding site is contributed by His258. Lys260 carries the post-translational modification N6-acetyllysine. At Tyr275 the chain carries Phosphotyrosine. Thr287 carries the post-translational modification Phosphothreonine. Residue Ser295 is modified to Phosphoserine. Substrate is bound by residues Arg318 and Ser345. A Phosphoserine modification is found at Ser345. Lys352 is covalently cross-linked (Glycyl lysine isopeptide (Lys-Gly) (interchain with G-Cter in SUMO2)). Glu366 serves as the catalytic Proton donor. Thiamine diphosphate is bound at residue Phe392. His416 and Asp424 together coordinate substrate. Gln428 lines the thiamine diphosphate pocket. Position 474 (Arg474) interacts with substrate. N6-acetyllysine occurs at positions 538 and 603.

The protein belongs to the transketolase family. As to quaternary structure, homodimer. Requires Mg(2+) as cofactor. Ca(2+) serves as cofactor. It depends on Mn(2+) as a cofactor. Co(2+) is required as a cofactor. The cofactor is thiamine diphosphate.

It carries out the reaction D-sedoheptulose 7-phosphate + D-glyceraldehyde 3-phosphate = aldehydo-D-ribose 5-phosphate + D-xylulose 5-phosphate. In terms of biological role, catalyzes the transfer of a two-carbon ketol group from a ketose donor to an aldose acceptor, via a covalent intermediate with the cofactor thiamine pyrophosphate. The polypeptide is Transketolase (Tkt) (Rattus norvegicus (Rat)).